We begin with the raw amino-acid sequence, 516 residues long: GMP synthase [glutamine-hydrolyzing] (516 aa).

The Glutamine amidotransferase type-1 domain occupies 7–199 (KIIILDFGSQ…VFGLCKCQAT (193 aa)). The active-site Nucleophile is the C84. Active-site residues include H173 and E175. The GMPS ATP-PPase domain maps to 200–391 (WTMQGFIESN…LGLPDEAVHR (192 aa)). An ATP-binding site is contributed by 227-233 (SGGVDSS).

Homodimer.

It catalyses the reaction XMP + L-glutamine + ATP + H2O = GMP + L-glutamate + AMP + diphosphate + 2 H(+). It participates in purine metabolism; GMP biosynthesis; GMP from XMP (L-Gln route): step 1/1. In terms of biological role, catalyzes the synthesis of GMP from XMP. The protein is GMP synthase [glutamine-hydrolyzing] of Desulfotalea psychrophila (strain LSv54 / DSM 12343).